Here is a 2768-residue protein sequence, read N- to C-terminus: Thyroglobulin (2768 aa).

Positions M1 to A20 are cleaved as a signal peptide. The residue at position 25 (Y25) is an Iodotyrosine; alternate. Residue Y25 is modified to Sulfotyrosine; alternate. At Y25 the chain carries Thyroxine; alternate. Y25 bears the Triiodothyronine; alternate mark. 4 consecutive Thyroglobulin type-1 domains span residues L32–C93, L94–C161, P162–C298, and P299–C359. 8 cysteine pairs are disulfide-bonded: C35–C53, C64–C71, C73–C93, C97–C121, C132–C139, C141–C161, C165–C184, and C195–C236. At Y109 the chain carries Iodotyrosine. An N-linked (GlcNAc...) asparagine glycan is attached at N111. Iodotyrosine; alternate is present on Y150. Y150 carries the post-translational modification Diiodotyrosine; alternate. N199 carries an N-linked (GlcNAc...) asparagine glycan. An iodotyrosine mark is found at Y235 and Y259. 8 cysteine pairs are disulfide-bonded: C302–C320, C331–C337, C339–C365, C408–C608, C631–C636, C638–C658, C662–C687, and C698–C703. N-linked (GlcNAc...) asparagine glycans are attached at residues N484, N496, and N545. Thyroglobulin type-1 domains follow at residues A605–C658, P659–C726, P727–C922, P923–C1074, P1075–C1146, and P1147–C1211. An Iodotyrosine; alternate modification is found at Y704. The residue at position 704 (Y704) is a Thyroxine; alternate. Y704 bears the Triiodothyronine; alternate mark. Y704 is modified (diiodotyrosine; alternate). Intrachain disulfides connect C705–C726, C730–C763, C774–C899, C901–C922, C926–C1032, C1043–C1050, C1052–C1074, C1078–C1109, C1127–C1146, C1150–C1170, C1182–C1189, C1191–C1211, C1216–C1265, C1232–C1246, C1306–C1356, and C1331–C1347. The N-linked (GlcNAc...) asparagine glycan is linked to N748. Position 785 is an iodotyrosine (Y785). A glycan (N-linked (GlcNAc...) asparagine) is linked at N817. Residue Y867 is modified to Iodotyrosine; alternate. Residue Y867 is modified to Diiodotyrosine; alternate. Y884 is modified (diiodotyrosine). An N-linked (GlcNAc...) asparagine glycan is attached at N948. Y993 is subject to Iodotyrosine; alternate. Y993 carries the post-translational modification Diiodotyrosine; alternate. N1017 carries an N-linked (GlcNAc...) asparagine glycan. Residue N1141 is glycosylated (N-linked (GlcNAc...) asparagine). Y1310 carries the iodotyrosine modification. Y1310 is modified (thyroxine). N-linked (GlcNAc...) asparagine glycosylation is found at N1349 and N1365. Disulfide bonds link C1441–C1458, C1461–C1472, C1475–C1489, C1492–C1509, C1513–C1522, C1542–C1564, C1602–C1626, C1606–C1612, and C1638–C1661. Type II repeat units lie at residues P1455–Q1468, D1469–G1485, and S1486–G1502. Residues V1510–C1564 form the Thyroglobulin type-1 11 domain. The stretch at C1602–F1722 is one Type IIIA repeat. An N-linked (GlcNAc...) asparagine glycan is attached at N1715. 4 cysteine pairs are disulfide-bonded: C1723/C1748, C1727/C1733, C1732/C1834, and C1759/C1776. One copy of the Type IIIB repeat lies at C1723 to W1891. N-linked (GlcNAc...) asparagine glycosylation is found at N1773 and N1866. 7 disulfide bridges follow: C1892–C1918, C1896–C1903, C1927–C1938, C1995–C2023, C1999–C2005, C2004–C2075, and C2034–C2047. The Type IIIA repeat unit spans residues C1892–E1994. N1937 carries N-linked (GlcNAc...) asparagine glycosylation. A Type IIIB repeat occupies C1995–Q2127. N-linked (GlcNAc...) asparagine glycosylation is present at N2012. N2122 is a glycosylation site (N-linked (GlcNAc...) asparagine). One copy of the Type IIIA repeat lies at D2128–R2185. 3 disulfides stabilise this stretch: C2130/C2154, C2134/C2140, and C2163/C2172. The residue at position 2184 (Y2184) is an Iodotyrosine. The cholinesterase-like (ChEL) stretch occupies residues G2188–K2768. A glycan (N-linked (GlcNAc...) asparagine) is linked at N2251. Cysteines 2265 and 2282 form a disulfide. N2296 and N2445 each carry an N-linked (GlcNAc...) asparagine glycan. A disulfide bridge connects residues C2443 and C2454. Y2541 is subject to Thyroxine. The residue at position 2574 (Y2574) is an Iodotyrosine; alternate. Y2574 is subject to Thyroxine; alternate. Position 2574 is a triiodothyronine; alternate (Y2574). Diiodotyrosine; alternate is present on Y2574. N-linked (GlcNAc...) asparagine glycosylation occurs at N2583. Y2588 and Y2618 each carry iodotyrosine. C2592 and C2716 form a disulfide bridge. Y2698 carries the post-translational modification Diiodotyrosine. The tract at residues G2731 to K2768 is disordered. A compositionally biased stretch (acidic residues) spans E2743–F2755. Y2766 bears the Iodotyrosine; alternate mark. Y2766 carries the post-translational modification Thyroxine; alternate. At Y2766 the chain carries Triiodothyronine; alternate. Residue Y2766 is modified to Diiodotyrosine; alternate.

The protein belongs to the type-B carboxylesterase/lipase family. As to quaternary structure, monomer. Homodimer (via ChEL region); occurs in the endoplasmic reticulum and is required for export to the Golgi apparatus. Homooligomer; disulfide-linked; stored in this form in the thyroid follicle lumen. Post-translationally, iodinated on tyrosine residues by TPO. There are 4 pairs of iodinated tyrosines used for coupling: acceptor Tyr-25 is coupled to donor Tyr-150 or Tyr-235, acceptor Tyr-2574 is coupled to donor Tyr-2541, acceptor Tyr-2766 in monomer 1 is coupled to donor Tyr-2766 in monomer 2 and acceptor Tyr-1310 in monomer 1 is coupled to donor Tyr-109 in monomer 2. Sulfated tyrosines are desulfated during iodination. In terms of processing, undergoes sequential proteolysis by cathepsins to release thyroxine (T4) and triiodothyronine (T3) hormones. In the thyroid follicle lumen, cross-linked TG (storage form) is solubilized by limited proteolysis mediated by cathepsins CTSB and/or CTSL. Partially cleaved TG is further processed by CTSK/cathepsin K and/or CTSL resulting in the release of thyroxine (T4). Following endocytosis, further processing occurs leading to the release of triiodothyronine (T3) and more T4 hormones. As to expression, specifically expressed in the thyroid gland.

It is found in the secreted. In terms of biological role, acts as a substrate for the production of iodinated thyroid hormones thyroxine (T4) and triiodothyronine (T3). The synthesis of T3 and T4 involves iodination of selected tyrosine residues of TG/thyroglobulin followed by their oxidative coupling. Following TG re-internalization and lysosomal-mediated proteolysis, T3 and T4 are released from the polypeptide backbone leading to their secretion into the bloodstream. One dimer produces 7 thyroid hormone molecules. The sequence is that of Thyroglobulin (Tg) from Rattus norvegicus (Rat).